A 367-amino-acid chain; its full sequence is Leucine-rich repeat-containing protein 28 (367 aa).

9 LRR repeats span residues 16–36, 42–63, 66–87, 89–110, 112–133, 135–156, 158–180, 181–202, and 204–226; these read KHKN…ELLK, YLER…LAQK, NLVE…IGSL, KLQC…IGRL, ALRH…VGDL, ELQT…LHMC, SLQY…CQLP, SLNE…LGRS, and ELQY…LYNK.

The sequence is that of Leucine-rich repeat-containing protein 28 (LRRC28) from Homo sapiens (Human).